The primary structure comprises 822 residues: MQDKNLVNVNLTKEMKASFIDYAMSVIVARALPDVRDGLKPVHRRILYGMNELGVTPDKPHKKSARITGDVMGKYHPHGDSSIYEAMVRMAQWWSYRYMLVDGHGNFGSMDGDSAAAQRYTEARMSKIALEMLRDINKNTVDFVDNYDANEREPLVLPARFPNLLVNGATGIAVGMATNIPPHNLGETIDAVKLVMDNPEVTTKDLMEVLPGPDFPTGALVMGKSGIHKAYETGKGSIVLRSRTEIETTKTGRERIVVTEFPYMVNKTKVHEHIVRLVQEKRIEGITAVRDESNREGVRFVIEVKRDASANVILNNLFKMTQMQTNFGFNMLAIQNGIPKILSLRQILDAYIEHQKEVVVRRTRFDKEKAEARAHILEGLLIALDHIDEVIRIIRASETDAEAQAELMSKFKLSERQSQAILDMRLRRLTGLERDKIQSEYDDLLALIADLADILAKPERVSQIIKDELDEVKRKFSDKRRTELMIGQVLSLEDEDLIEESDVLITLSNRGYIKRLDQDEFTAQKRGGRGVQGTGVKDDDFVRELVSTSTHDHLLFFTNKGRVYRLKGYEIPEYGRTAKGLPVVNLLKLDEDESIQTVINVESDRSDDAYLFFTTRHGIVKRTSVKEFANIRQNGLKALNLKDEDELINVLLAEGDMDIIIGTKFGYAVRFNQSAVRGMSRIATGVKGVNLREGDTVVGASLITDQDEVLIITEKGYGKRTVATEYPTKGRGGKGMQTAKITEKNGLLAGLMTVQGDEDLMIITDTGVMIRTNLANISQTGRATMGVKVMRLDQDAQIVTFTTVAVAEKEEVGTENETEGEA.

Positions 32-497 constitute a Topo IIA-type catalytic domain; the sequence is LPDVRDGLKP…QVLSLEDEDL (466 aa). Tyr120 serves as the catalytic O-(5'-phospho-DNA)-tyrosine intermediate. The GyrA-box signature appears at 524–530; that stretch reads QKRGGRG.

The protein belongs to the type II topoisomerase GyrA/ParC subunit family. As to quaternary structure, heterotetramer, composed of two GyrA and two GyrB chains. In the heterotetramer, GyrA contains the active site tyrosine that forms a transient covalent intermediate with DNA, while GyrB binds cofactors and catalyzes ATP hydrolysis.

Its subcellular location is the cytoplasm. It carries out the reaction ATP-dependent breakage, passage and rejoining of double-stranded DNA.. Its function is as follows. A type II topoisomerase that negatively supercoils closed circular double-stranded (ds) DNA in an ATP-dependent manner to modulate DNA topology and maintain chromosomes in an underwound state. Negative supercoiling favors strand separation, and DNA replication, transcription, recombination and repair, all of which involve strand separation. Also able to catalyze the interconversion of other topological isomers of dsDNA rings, including catenanes and knotted rings. Type II topoisomerases break and join 2 DNA strands simultaneously in an ATP-dependent manner. The polypeptide is DNA gyrase subunit A (Streptococcus pneumoniae serotype 4 (strain ATCC BAA-334 / TIGR4)).